We begin with the raw amino-acid sequence, 489 residues long: Cobyric acid synthase (489 aa).

The GATase cobBQ-type domain maps to 252–441; the sequence is ALTIGVIQLP…IHGIFANTEF (190 aa). The active-site Nucleophile is the Cys330. Residue His433 is part of the active site.

The protein belongs to the CobB/CobQ family. CobQ subfamily.

The protein operates within cofactor biosynthesis; adenosylcobalamin biosynthesis. In terms of biological role, catalyzes amidations at positions B, D, E, and G on adenosylcobyrinic A,C-diamide. NH(2) groups are provided by glutamine, and one molecule of ATP is hydrogenolyzed for each amidation. The polypeptide is Cobyric acid synthase (Herpetosiphon aurantiacus (strain ATCC 23779 / DSM 785 / 114-95)).